Here is a 451-residue protein sequence, read N- to C-terminus: Coproporphyrinogen III oxidase (451 aa).

Residues 10-15 (GGGISG), 36-37 (DP), 58-61 (GAEA), V242, W393, and 429-431 (IGV) each bind FAD.

Belongs to the protoporphyrinogen/coproporphyrinogen oxidase family. Coproporphyrinogen III oxidase subfamily. Requires FAD as cofactor.

Its subcellular location is the cytoplasm. The catalysed reaction is coproporphyrinogen III + 3 O2 = coproporphyrin III + 3 H2O2. The protein operates within porphyrin-containing compound metabolism; protoheme biosynthesis. Its function is as follows. Involved in coproporphyrin-dependent heme b biosynthesis. Catalyzes the oxidation of coproporphyrinogen III to coproporphyrin III. This Mycobacterium leprae (strain TN) protein is Coproporphyrinogen III oxidase.